Reading from the N-terminus, the 512-residue chain is ATP synthase subunit alpha (512 aa).

Residue 169–176 (GDRQTGKT) coordinates ATP.

The protein belongs to the ATPase alpha/beta chains family. In terms of assembly, F-type ATPases have 2 components, CF(1) - the catalytic core - and CF(0) - the membrane proton channel. CF(1) has five subunits: alpha(3), beta(3), gamma(1), delta(1), epsilon(1). CF(0) has three main subunits: a(1), b(2) and c(9-12). The alpha and beta chains form an alternating ring which encloses part of the gamma chain. CF(1) is attached to CF(0) by a central stalk formed by the gamma and epsilon chains, while a peripheral stalk is formed by the delta and b chains.

Its subcellular location is the cell inner membrane. It carries out the reaction ATP + H2O + 4 H(+)(in) = ADP + phosphate + 5 H(+)(out). In terms of biological role, produces ATP from ADP in the presence of a proton gradient across the membrane. The alpha chain is a regulatory subunit. The sequence is that of ATP synthase subunit alpha from Rickettsia akari (strain Hartford).